The primary structure comprises 186 residues: Elongation factor P (186 aa).

This sequence belongs to the elongation factor P family.

Its subcellular location is the cytoplasm. Its pathway is protein biosynthesis; polypeptide chain elongation. Functionally, involved in peptide bond synthesis. Stimulates efficient translation and peptide-bond synthesis on native or reconstituted 70S ribosomes in vitro. Probably functions indirectly by altering the affinity of the ribosome for aminoacyl-tRNA, thus increasing their reactivity as acceptors for peptidyl transferase. This is Elongation factor P from Streptococcus thermophilus (strain CNRZ 1066).